The chain runs to 150 residues: D-aminoacyl-tRNA deacylase (150 aa).

Residues 133 to 134 (GP) carry the Gly-cisPro motif, important for rejection of L-amino acids motif.

This sequence belongs to the DTD family. As to quaternary structure, homodimer.

Its subcellular location is the cytoplasm. It catalyses the reaction glycyl-tRNA(Ala) + H2O = tRNA(Ala) + glycine + H(+). The catalysed reaction is a D-aminoacyl-tRNA + H2O = a tRNA + a D-alpha-amino acid + H(+). Functionally, an aminoacyl-tRNA editing enzyme that deacylates mischarged D-aminoacyl-tRNAs. Also deacylates mischarged glycyl-tRNA(Ala), protecting cells against glycine mischarging by AlaRS. Acts via tRNA-based rather than protein-based catalysis; rejects L-amino acids rather than detecting D-amino acids in the active site. By recycling D-aminoacyl-tRNA to D-amino acids and free tRNA molecules, this enzyme counteracts the toxicity associated with the formation of D-aminoacyl-tRNA entities in vivo and helps enforce protein L-homochirality. This Kocuria rhizophila (strain ATCC 9341 / DSM 348 / NBRC 103217 / DC2201) protein is D-aminoacyl-tRNA deacylase.